The sequence spans 218 residues: Small ribosomal subunit protein uS3c (218 aa).

The region spanning 47–118 is the KH type-2 domain; it reads VQKHMRISSG…RLNITITRIA (72 aa).

This sequence belongs to the universal ribosomal protein uS3 family. As to quaternary structure, part of the 30S ribosomal subunit.

The protein localises to the plastid. The protein resides in the chloroplast. The protein is Small ribosomal subunit protein uS3c (rps3) of Amborella trichopoda.